Consider the following 289-residue polypeptide: tRNA pseudouridine synthase B (289 aa).

Asp55 (nucleophile) is an active-site residue. The interval Pro243 to Arg289 is disordered. The segment covering Ala265 to Arg289 has biased composition (basic and acidic residues).

Belongs to the pseudouridine synthase TruB family. Type 1 subfamily.

The enzyme catalyses uridine(55) in tRNA = pseudouridine(55) in tRNA. Responsible for synthesis of pseudouridine from uracil-55 in the psi GC loop of transfer RNAs. This chain is tRNA pseudouridine synthase B, found in Chlorobium luteolum (strain DSM 273 / BCRC 81028 / 2530) (Pelodictyon luteolum).